The following is a 301-amino-acid chain: uncharacterized protein (301 aa).

3 residues coordinate a divalent metal cation: Glu146, Glu148, and Asp177.

This sequence belongs to the FAH family.

This is an uncharacterized protein from Staphylococcus saprophyticus subsp. saprophyticus (strain ATCC 15305 / DSM 20229 / NCIMB 8711 / NCTC 7292 / S-41).